A 302-amino-acid chain; its full sequence is MMILMEYHNPVLLKESVDGLDVKPDGIYVDVTFGGGGHSKEILKRLGPDGKLYAFDQDKDALENKIEDGRFTLINENFRYLKRFLRFYGIKKVDGVLGDFGVSSHQFNEAERGFSTRFDAKLDMRMNQGDKLSAYEVINEYEEEQLKKLFWAYADLKNAPKLARTIVSERKNNPIETSEQLNDLLKPLLFKGKENKILAQIYQAIRIEVNQEIEVLKEFLLQTEEILKPGGRLSLISYHSLEDRLVKRYIRSGLFEGEPEKDMYGNISVPFKKVNGLIIPSKEEIQQNNRARSAKLRVARKL.

S-adenosyl-L-methionine contacts are provided by residues 36–38 (GGH), aspartate 56, phenylalanine 84, aspartate 99, and glutamine 106.

The protein belongs to the methyltransferase superfamily. RsmH family.

It is found in the cytoplasm. It catalyses the reaction cytidine(1402) in 16S rRNA + S-adenosyl-L-methionine = N(4)-methylcytidine(1402) in 16S rRNA + S-adenosyl-L-homocysteine + H(+). Specifically methylates the N4 position of cytidine in position 1402 (C1402) of 16S rRNA. This Christiangramia forsetii (strain DSM 17595 / CGMCC 1.15422 / KT0803) (Gramella forsetii) protein is Ribosomal RNA small subunit methyltransferase H.